A 324-amino-acid chain; its full sequence is Protein GET4 (324 aa).

The protein belongs to the GET4 family. As to quaternary structure, interacts with GET3A.

It is found in the cytoplasm. Its subcellular location is the cytosol. Functionally, involved in the regulation of root hair growth. The chain is Protein GET4 from Arabidopsis thaliana (Mouse-ear cress).